Here is a 176-residue protein sequence, read N- to C-terminus: Large ribosomal subunit protein uL6 (176 aa).

Basic and acidic residues predominate over residues 153–170; it reads PEPYKGKGIRYGDEEVRR. The disordered stretch occupies residues 153–176; sequence PEPYKGKGIRYGDEEVRRKEAKKK.

Belongs to the universal ribosomal protein uL6 family. As to quaternary structure, part of the 50S ribosomal subunit.

Functionally, this protein binds to the 23S rRNA, and is important in its secondary structure. It is located near the subunit interface in the base of the L7/L12 stalk, and near the tRNA binding site of the peptidyltransferase center. In Chromohalobacter salexigens (strain ATCC BAA-138 / DSM 3043 / CIP 106854 / NCIMB 13768 / 1H11), this protein is Large ribosomal subunit protein uL6.